The chain runs to 78 residues: Metallothionein-like protein type 2 (78 aa).

This sequence belongs to the metallothionein superfamily. Type 15 family.

In terms of biological role, metallothioneins have a high content of cysteine residues that bind various heavy metals. This chain is Metallothionein-like protein type 2, found in Actinidia deliciosa (Kiwi).